Consider the following 284-residue polypeptide: Hypersensitive-induced response protein 1 (284 aa).

G2 is lipidated: N-myristoyl glycine.

As to quaternary structure, interacts with LRR1.

The protein resides in the cell membrane. In terms of biological role, positive regulator of hypersensitive response (HR)-like cell death. May be involved in potassium ion channel regulation. This is Hypersensitive-induced response protein 1 from Oryza sativa subsp. japonica (Rice).